The following is a 91-amino-acid chain: Small ribosomal subunit protein uS19 (91 aa).

Belongs to the universal ribosomal protein uS19 family.

In terms of biological role, protein S19 forms a complex with S13 that binds strongly to the 16S ribosomal RNA. The chain is Small ribosomal subunit protein uS19 from Cupriavidus pinatubonensis (strain JMP 134 / LMG 1197) (Cupriavidus necator (strain JMP 134)).